The sequence spans 324 residues: Ribose-phosphate pyrophosphokinase (324 aa).

Residues 45–47 (NGE) and 104–105 (RQ) each bind ATP. Positions 138 and 178 each coordinate Mg(2+). Lysine 201 is a catalytic residue. D-ribose 5-phosphate contacts are provided by residues arginine 203, aspartate 229, and 233-237 (DTGGT).

This sequence belongs to the ribose-phosphate pyrophosphokinase family. Class I subfamily. Homohexamer. Mg(2+) serves as cofactor.

It is found in the cytoplasm. It catalyses the reaction D-ribose 5-phosphate + ATP = 5-phospho-alpha-D-ribose 1-diphosphate + AMP + H(+). The protein operates within metabolic intermediate biosynthesis; 5-phospho-alpha-D-ribose 1-diphosphate biosynthesis; 5-phospho-alpha-D-ribose 1-diphosphate from D-ribose 5-phosphate (route I): step 1/1. Its function is as follows. Involved in the biosynthesis of the central metabolite phospho-alpha-D-ribosyl-1-pyrophosphate (PRPP) via the transfer of pyrophosphoryl group from ATP to 1-hydroxyl of ribose-5-phosphate (Rib-5-P). The protein is Ribose-phosphate pyrophosphokinase of Streptomyces avermitilis (strain ATCC 31267 / DSM 46492 / JCM 5070 / NBRC 14893 / NCIMB 12804 / NRRL 8165 / MA-4680).